A 284-amino-acid polypeptide reads, in one-letter code: Acetylglutamate kinase (284 aa).

Residues 64-65 (GG), Arg86, and Asn179 each bind substrate.

Belongs to the acetylglutamate kinase family. ArgB subfamily.

Its subcellular location is the cytoplasm. It carries out the reaction N-acetyl-L-glutamate + ATP = N-acetyl-L-glutamyl 5-phosphate + ADP. It functions in the pathway amino-acid biosynthesis; L-arginine biosynthesis; N(2)-acetyl-L-ornithine from L-glutamate: step 2/4. In terms of biological role, catalyzes the ATP-dependent phosphorylation of N-acetyl-L-glutamate. This chain is Acetylglutamate kinase, found in Prochlorococcus marinus subsp. pastoris (strain CCMP1986 / NIES-2087 / MED4).